Here is a 707-residue protein sequence, read N- to C-terminus: U-box domain-containing protein 2 (707 aa).

The region spanning 239-313 (RVPSDFRCSL…ASWCETNNVY (75 aa)) is the U-box domain. ARM repeat units lie at residues 453–492 (TDNR…NLSI), 494–534 (DNNK…SLSV), 536–575 (EEYK…NLSI), 577–615 (HENK…NLAT), and 617–656 (REGK…QLCT).

It catalyses the reaction S-ubiquitinyl-[E2 ubiquitin-conjugating enzyme]-L-cysteine + [acceptor protein]-L-lysine = [E2 ubiquitin-conjugating enzyme]-L-cysteine + N(6)-ubiquitinyl-[acceptor protein]-L-lysine.. It participates in protein modification; protein ubiquitination. Its function is as follows. Functions as an E3 ubiquitin ligase. In Arabidopsis thaliana (Mouse-ear cress), this protein is U-box domain-containing protein 2 (PUB2).